Consider the following 343-residue polypeptide: Phosphate acyltransferase (343 aa).

Belongs to the PlsX family. As to quaternary structure, homodimer. Probably interacts with PlsY.

It is found in the cytoplasm. It carries out the reaction a fatty acyl-[ACP] + phosphate = an acyl phosphate + holo-[ACP]. It functions in the pathway lipid metabolism; phospholipid metabolism. In terms of biological role, catalyzes the reversible formation of acyl-phosphate (acyl-PO(4)) from acyl-[acyl-carrier-protein] (acyl-ACP). This enzyme utilizes acyl-ACP as fatty acyl donor, but not acyl-CoA. In Acidovorax sp. (strain JS42), this protein is Phosphate acyltransferase.